The following is a 665-amino-acid chain: Soluble lamin-associated protein of 75 kDa (665 aa).

Residues 309-665 (AFASTSEGPE…GPGKKKAKLT (357 aa)) form a disordered region. Positions 311-326 (ASTSEGPEKTPVSTRT) are enriched in polar residues. Over residues 327-338 (RSSHLKRPKIGK) the composition is skewed to basic residues. Residues S348 and S377 each carry the phosphoserine modification. Positions 376–397 (SSEEFLEEEPEQGVIDFEDESG) are enriched in acidic residues. The segment covering 412 to 421 (QKQDGDKDSA) has biased composition (basic and acidic residues). The span at 440 to 451 (TEDEDSTSEGLE) shows a compositional bias: acidic residues. Residues S447 and S512 each carry the phosphoserine modification. Polar residues-rich tracts occupy residues 521–533 (LGSSDNVATVSNI) and 553–566 (VSQNLSPNTTSSVE). A phosphoserine mark is found at S610, S613, and S630. Residues 646–665 (NLRRKAKGHKGPGKKKAKLT) show a composition bias toward basic residues.

It belongs to the FAM169 family.

The protein resides in the nucleus envelope. It localises to the nucleus inner membrane. This Mus musculus (Mouse) protein is Soluble lamin-associated protein of 75 kDa (Fam169a).